A 61-amino-acid polypeptide reads, in one-letter code: Metallothionein-I, hippocampal (61 aa).

Residue Met1 is modified to N-acetylmethionine. The tract at residues Met1–Cys29 is beta. Residues Cys5, Cys7, Cys13, Cys15, Cys19, Cys21, Cys24, Cys26, Cys29, Cys33, Cys34, Cys36, Cys37, Cys41, Cys44, Cys48, Cys50, and Cys57 each contribute to the a divalent metal cation site. Residues Lys30–Ala61 are alpha. Residue Ser58 is modified to Phosphoserine. A divalent metal cation is bound by residues Cys59 and Cys60.

Belongs to the metallothionein superfamily. Type 1 family.

In terms of biological role, metallothioneins have a high content of cysteine residues that bind various heavy metals; these proteins are transcriptionally regulated by both heavy metals and glucocorticoids. This isoform may play a role in regulating the transport, accumulation, and compartmentation of zinc in the hippocampus. In Bos taurus (Bovine), this protein is Metallothionein-I, hippocampal.